We begin with the raw amino-acid sequence, 146 residues long: Snaclec echicetin subunit beta (146 aa).

The signal sequence occupies residues Met1 to Ala23. Intrachain disulfides connect Cys25–Cys36, Cys53–Cys142, and Cys119–Cys134. Residues Tyr32–Lys143 enclose the C-type lectin domain.

The protein belongs to the snaclec family. In terms of assembly, heterodimer of subunits alpha and beta; disulfide-linked. Expressed by the venom gland.

The protein resides in the secreted. Binding of echicetin to glycoprotein Ibalpha (GP1BA) receptor on platelets alone results in inhibition of platelet aggregation, while binding to both GPIba receptor and IgMk promotes platelet aggregation and signal transduction. This chain is Snaclec echicetin subunit beta, found in Echis carinatus (Saw-scaled viper).